The following is a 119-amino-acid chain: UPF0145 protein Ta0182 (119 aa).

It belongs to the UPF0145 family.

This Thermoplasma acidophilum (strain ATCC 25905 / DSM 1728 / JCM 9062 / NBRC 15155 / AMRC-C165) protein is UPF0145 protein Ta0182.